We begin with the raw amino-acid sequence, 131 residues long: DNA-directed RNA polymerase subunit Rpo8 (131 aa).

The protein belongs to the archaeal Rpo8 RNA polymerase subunit family. Part of the 13-subunit RNA polymerase complex. Interacts with Rpo1N on the periphery of the clamp head.

It is found in the cytoplasm. It carries out the reaction RNA(n) + a ribonucleoside 5'-triphosphate = RNA(n+1) + diphosphate. Functionally, DNA-dependent RNA polymerase (RNAP) catalyzes the transcription of DNA into RNA using the four ribonucleoside triphosphates as substrates. The chain is DNA-directed RNA polymerase subunit Rpo8 from Saccharolobus shibatae (strain ATCC 51178 / DSM 5389 / JCM 8931 / NBRC 15437 / B12) (Sulfolobus shibatae).